We begin with the raw amino-acid sequence, 353 residues long: Ribosome biogenesis protein BRX1 homolog (353 aa).

Positions 1-10 (MAATKRKRRG) are enriched in basic residues. The tract at residues 1 to 46 (MAATKRKRRGGFAVQAKKPKRNEKDAEPPAKRHATAEEVEEEERDR) is disordered. Basic and acidic residues predominate over residues 22 to 36 (NEKDAEPPAKRHATA). The Brix domain occupies 60 to 249 (ERILIFSSRG…LIKIFQGSFG (190 aa)). Residue Lys-160 forms a Glycyl lysine isopeptide (Lys-Gly) (interchain with G-Cter in SUMO2) linkage. Phosphoserine is present on Ser-261. Lys-276 carries the N6-acetyllysine modification. Glycyl lysine isopeptide (Lys-Gly) (interchain with G-Cter in SUMO2) cross-links involve residues Lys-314 and Lys-322.

This sequence belongs to the BRX1 family.

Its subcellular location is the nucleus. It localises to the nucleolus. In terms of biological role, required for biogenesis of the 60S ribosomal subunit. In Pongo abelii (Sumatran orangutan), this protein is Ribosome biogenesis protein BRX1 homolog (BRIX1).